A 784-amino-acid polypeptide reads, in one-letter code: Ubiquitin carboxyl-terminal hydrolase 1 (784 aa).

2 disordered regions span residues 1–21 (MPGV…SKKN) and 34–56 (KRAL…RGSE). Residues 7-16 (SESNGLSRGS) are compositionally biased toward polar residues. A phosphoserine mark is found at Ser16 and Ser42. The span at 45–56 (NEEKTSEYRGSE) shows a compositional bias: basic and acidic residues. Ser67 is modified (phosphoserine). The USP domain maps to 81-784 (VGLNNLGNTC…TPYLLFYKKL (704 aa)). Cys90 (nucleophile) is an active-site residue. Basic and acidic residues-rich tracts occupy residues 233–243 (VEEQSLQKEET) and 252–264 (DSMR…KEQL). 2 disordered regions span residues 233–342 (VEEQ…INWL) and 362–414 (TTNQ…KSGN). At Ser474 the chain carries Phosphoserine. His592 functions as the Proton acceptor in the catalytic mechanism. The segment at 684–725 (NPDKVVGTPFTDNRNSETNDTTNGTHESDRNKESSDQTGVNM) is disordered. The span at 693–708 (FTDNRNSETNDTTNGT) shows a compositional bias: polar residues. Residues 709–718 (HESDRNKESS) are compositionally biased toward basic and acidic residues. A Phosphoserine modification is found at Ser767.

Belongs to the peptidase C19 family. Interacts with FANCD2 and PCNA. Interacts with WDR48. Interacts with ATAD5; the interaction regulates USP1-mediated PCNA deubiquitination. Autocatalytic cleavage of USP1 following UV irradiation inactivates it, leading to an increase in ubiquitinated PCNA, recruitment of POLH and translesion synthesis. In terms of processing, ubiquitinated by the CRL2(KLHDC2) complex following autocatalytic cleavage, leading to its degradation: the CRL2(KLHDC2) complex recognizes the diglycine (Gly-Gly) at the C-terminus.

It is found in the nucleus. It carries out the reaction Thiol-dependent hydrolysis of ester, thioester, amide, peptide and isopeptide bonds formed by the C-terminal Gly of ubiquitin (a 76-residue protein attached to proteins as an intracellular targeting signal).. Functionally, negative regulator of DNA damage repair which specifically deubiquitinates monoubiquitinated FANCD2. Also involved in PCNA-mediated translesion synthesis (TLS) by deubiquitinating monoubiquitinated PCNA. Has almost no deubiquitinating activity by itself and requires the interaction with WDR48 to have a high activity. In Mus musculus (Mouse), this protein is Ubiquitin carboxyl-terminal hydrolase 1.